Reading from the N-terminus, the 694-residue chain is E3 ubiquitin-protein ligase SPL11 (694 aa).

Residues 1–12 are compositionally biased toward acidic residues; sequence MAGDRAEEEEGE. 2 disordered regions span residues 1–21 and 343–363; these read MAGD…ARAA and NGME…ACSS. The U-box domain occupies 272–346; sequence TIPDEFRCPI…SQWCETNGME (75 aa). A compositionally biased stretch (polar residues) spans 350–363; sequence RSTQPNKPTPACSS. ARM repeat units follow at residues 398–438, 439–479, 480–520, 521–561, 562–602, and 603–650; these read NANN…NLSI, HEDN…SLSV, IDEY…NLCI, YQGN…ILSS, HPEG…HLCS, and GEHH…FLVQ. Positions 650 to 667 are enriched in low complexity; that stretch reads QQQEEQESQSQASAQVPP. The tract at residues 650 to 694 is disordered; that stretch reads QQQEEQESQSQASAQVPPQATPEQVPENDIPEQLDSPASQYPMVV.

As to quaternary structure, interacts with SPIN1 (via N-terminus). In terms of tissue distribution, highly expressed in leaf, at intermediate levels in shoot and weakly in root.

Its subcellular location is the nucleus. It localises to the cytoplasm. The enzyme catalyses S-ubiquitinyl-[E2 ubiquitin-conjugating enzyme]-L-cysteine + [acceptor protein]-L-lysine = [E2 ubiquitin-conjugating enzyme]-L-cysteine + N(6)-ubiquitinyl-[acceptor protein]-L-lysine.. Its pathway is protein modification; protein ubiquitination. In terms of biological role, E3 ubiquitin-protein ligase that negatively regulates programmed cell death and disease resistance. Participates in flowering time control by mediating ubiquitination and subsequent proteasomal degradation of SPIN1. The polypeptide is E3 ubiquitin-protein ligase SPL11 (SPL11) (Oryza sativa subsp. japonica (Rice)).